Here is a 354-residue protein sequence, read N- to C-terminus: Rhodopsin (354 aa).

Topologically, residues 1-36 (MNGTEGPYFNVPMVNTTGIVRSPYEYPQYYLVSPAA) are extracellular. 2 N-linked (GlcNAc...) asparagine glycosylation sites follow: N2 and N15. A helical membrane pass occupies residues 37 to 61 (YAALGAYMFFLILVGFPINFLTLYV). Residues 62–73 (TLEHKKLRTPLN) are Cytoplasmic-facing. Residues 74–96 (YILLNLAVADLFMVFGGFTTTMY) form a helical membrane-spanning segment. The Extracellular segment spans residues 97-110 (TSMHGYFVLGRLGC). Cysteines 110 and 187 form a disulfide. The chain crosses the membrane as a helical span at residues 111–133 (NLEGFFATLGGEIGLWSLVVLAI). Residues 134–136 (ERW) carry the 'Ionic lock' involved in activated form stabilization motif. Residues 134–152 (ERWVVVCKPISNFRFGENH) lie on the Cytoplasmic side of the membrane. Residues 153 to 173 (AIMGLVFTWIMAASCAVPPLV) form a helical membrane-spanning segment. Topologically, residues 174–202 (GWSRYIPEGMQCSCGVDYYTRAEGFNNES) are extracellular. A helical transmembrane segment spans residues 203 to 224 (FVVYMFVCHFLIPLIVVFFCYG). Residues 225–252 (RLLCAVKEAAAAQQESETTQRAEREVTR) lie on the Cytoplasmic side of the membrane. Residues 253 to 274 (MVVIMVIGFLVCWLPYASVAWY) traverse the membrane as a helical segment. Topologically, residues 275–286 (IFTNQGSEFGPL) are extracellular. Residues 287 to 308 (FMTIPAFFAKSSSIYNPAIYIC) traverse the membrane as a helical segment. At K296 the chain carries N6-(retinylidene)lysine. The Cytoplasmic portion of the chain corresponds to 309-354 (MNKQFRNCMITTLCCGKNPFEEEEGASTTASKTEASSVSSSSVSPA). S-palmitoyl cysteine attachment occurs at residues C322 and C323. Residues 332–354 (EGASTTASKTEASSVSSSSVSPA) are disordered. The segment covering 334–354 (ASTTASKTEASSVSSSSVSPA) has biased composition (low complexity).

It belongs to the G-protein coupled receptor 1 family. Opsin subfamily. Post-translationally, phosphorylated on some or all of the serine and threonine residues present in the C-terminal region. Contains one covalently linked retinal chromophore.

It localises to the membrane. Its subcellular location is the cell projection. The protein localises to the cilium. It is found in the photoreceptor outer segment. Photoreceptor required for image-forming vision at low light intensity. While most salt water fish species use retinal as chromophore, most freshwater fish use 3-dehydroretinal, or a mixture of retinal and 3-dehydroretinal. Light-induced isomerization of 11-cis to all-trans retinal triggers a conformational change that activates signaling via G-proteins. Subsequent receptor phosphorylation mediates displacement of the bound G-protein alpha subunit by arrestin and terminates signaling. The chain is Rhodopsin (rho) from Oryzias latipes (Japanese rice fish).